The sequence spans 92 residues: Ribonuclease P protein component 1 (92 aa).

Belongs to the eukaryotic/archaeal RNase P protein component 1 family. Consists of a catalytic RNA component and at least 4-5 protein subunits.

The protein resides in the cytoplasm. It catalyses the reaction Endonucleolytic cleavage of RNA, removing 5'-extranucleotides from tRNA precursor.. Part of ribonuclease P, a protein complex that generates mature tRNA molecules by cleaving their 5'-ends. This Staphylothermus marinus (strain ATCC 43588 / DSM 3639 / JCM 9404 / F1) protein is Ribonuclease P protein component 1.